A 293-amino-acid polypeptide reads, in one-letter code: Acidic endochitinase SE2 (293 aa).

Positions 1-25 (MAAKIVSVLFLISLLIFASFESSHG) are cleaved as a signal peptide. Residues 26–293 (SQIVIYWGQN…GYSSAIKSSV (268 aa)) enclose the GH18 domain. 2 cysteine pairs are disulfide-bonded: Cys45/Cys91 and Cys75/Cys81. Glu151 functions as the Proton donor in the catalytic mechanism. Cys183 and Cys212 form a disulfide bridge.

Belongs to the glycosyl hydrolase 18 family. Chitinase class II subfamily. As to expression, accumulates in leaves during infection.

It is found in the secreted. The protein localises to the extracellular space. The catalysed reaction is Random endo-hydrolysis of N-acetyl-beta-D-glucosaminide (1-&gt;4)-beta-linkages in chitin and chitodextrins.. In terms of biological role, this protein functions as a defense against chitin containing fungal pathogens. This endochitinase also exhibits exochitinase activity, i.e. it is capable of hydrolyzing chito-oligosaccharides, including chitobiose. In Beta vulgaris (Sugar beet), this protein is Acidic endochitinase SE2 (SE2).